The sequence spans 393 residues: Alpha-1,2 mannosyltransferase KTR1 (393 aa).

Residues 1–16 (MAKIMIPASKQPVYKK) lie on the Cytoplasmic side of the membrane. A helical; Signal-anchor for type II membrane protein membrane pass occupies residues 17-34 (LGLLLVAVFTVYVFFHGA). Residues 35–68 (QYARGSAPSPKYSTVLSSGSGYKYSKVELPKYTG) form a stem region region. Over 35-393 (QYARGSAPSP…KPAGWQNHIG (359 aa)) the chain is Lumenal. Positions 69–393 (PREKATFVTL…KPAGWQNHIG (325 aa)) are catalytic. N-linked (GlcNAc...) asparagine glycosylation occurs at Asn120. The Nucleophile role is filled by Glu280.

Belongs to the glycosyltransferase 15 family. It depends on Mn(2+) as a cofactor. Post-translationally, N-glycosylated.

The protein resides in the golgi apparatus membrane. It participates in protein modification; protein glycosylation. Functionally, mannosyltransferase that transfers a mannose residue from GDP-mannose to a range of acceptors in vitro, forming an alpha-(1-&gt;2)-D-mannosyl-D-mannose linkage. This chain is Alpha-1,2 mannosyltransferase KTR1 (KTR1), found in Saccharomyces cerevisiae (strain ATCC 204508 / S288c) (Baker's yeast).